A 404-amino-acid chain; its full sequence is Glycerol-1-phosphate dehydrogenase [NAD(P)+] (404 aa).

Residues Asp55, 117–121, and 139–142 each bind NAD(+); these read GTVHD and TAPS. Asp144 contacts substrate. Ser148 contacts NAD(+). Asp191 serves as a coordination point for substrate. Asp191 and His271 together coordinate Ni(2+). His275 serves as a coordination point for substrate. His291 is a Ni(2+) binding site.

The protein belongs to the glycerol-1-phosphate dehydrogenase family. In terms of assembly, homodimer. Ni(2+) serves as cofactor.

It is found in the cytoplasm. The catalysed reaction is sn-glycerol 1-phosphate + NAD(+) = dihydroxyacetone phosphate + NADH + H(+). The enzyme catalyses sn-glycerol 1-phosphate + NADP(+) = dihydroxyacetone phosphate + NADPH + H(+). In terms of biological role, catalyzes the NAD(P)H-dependent reduction of dihydroxyacetonephosphate (DHAP or glycerone phosphate) to glycerol 1-phosphate (G1P). The G1P thus generated is probably used for the synthesis of phosphoglycerolipids in Gram-positive bacterial species. The protein is Glycerol-1-phosphate dehydrogenase [NAD(P)+] of Geobacillus thermodenitrificans (strain NG80-2).